The primary structure comprises 93 residues: Putative pterin-4-alpha-carbinolamine dehydratase (93 aa).

This sequence belongs to the pterin-4-alpha-carbinolamine dehydratase family.

The enzyme catalyses (4aS,6R)-4a-hydroxy-L-erythro-5,6,7,8-tetrahydrobiopterin = (6R)-L-erythro-6,7-dihydrobiopterin + H2O. The polypeptide is Putative pterin-4-alpha-carbinolamine dehydratase (Trichormus variabilis (strain ATCC 29413 / PCC 7937) (Anabaena variabilis)).